A 370-amino-acid chain; its full sequence is MKVKEQLFSLNAYVPGKNIEEVKREYGLSKIVKLASNENPFGCSKRVKEALALLNEQYALYPDGAAFELRQKVANHLKVQPEQLLFGSGLDEVIQMISRALLHKGTNVVMARPTFSQYRHHAIIEGAEVREVPLKDGIHDLDAMLEQVDYNTRIVWVCNPNNPTGTYVEKQKLLSFLENVPKSSLVIMDEAYYEYAGAEDYPQTLPLLEKYENLMVLRTFSKAYGLAAFRIGYAVGYAELIKKLEVARLPFNTSTVAQVVASVAIDDQSFLQECVKKNAEGLEQYYQFCKEYDVFYYPSQTNFIFLKIGLPGNEVFERLMKKGYIVRSGAPFGLLDGIRITVGLKEENAEIIALLANLVKEHVKKEETYS.

Lysine 222 is modified (N6-(pyridoxal phosphate)lysine).

The protein belongs to the class-II pyridoxal-phosphate-dependent aminotransferase family. Histidinol-phosphate aminotransferase subfamily. In terms of assembly, homodimer. Requires pyridoxal 5'-phosphate as cofactor.

The enzyme catalyses L-histidinol phosphate + 2-oxoglutarate = 3-(imidazol-4-yl)-2-oxopropyl phosphate + L-glutamate. The protein operates within amino-acid biosynthesis; L-histidine biosynthesis; L-histidine from 5-phospho-alpha-D-ribose 1-diphosphate: step 7/9. This is Histidinol-phosphate aminotransferase from Bacillus cytotoxicus (strain DSM 22905 / CIP 110041 / 391-98 / NVH 391-98).